The primary structure comprises 177 residues: ATP-dependent protease subunit HslV (177 aa).

Residue threonine 2 is part of the active site. Na(+) is bound by residues glycine 157, cysteine 160, and threonine 163.

The protein belongs to the peptidase T1B family. HslV subfamily. In terms of assembly, a double ring-shaped homohexamer of HslV is capped on each side by a ring-shaped HslU homohexamer. The assembly of the HslU/HslV complex is dependent on binding of ATP.

It is found in the cytoplasm. The enzyme catalyses ATP-dependent cleavage of peptide bonds with broad specificity.. Its activity is regulated as follows. Allosterically activated by HslU binding. Protease subunit of a proteasome-like degradation complex believed to be a general protein degrading machinery. This chain is ATP-dependent protease subunit HslV, found in Aeromonas hydrophila subsp. hydrophila (strain ATCC 7966 / DSM 30187 / BCRC 13018 / CCUG 14551 / JCM 1027 / KCTC 2358 / NCIMB 9240 / NCTC 8049).